The primary structure comprises 259 residues: uncharacterized protein (259 aa).

The region spanning 4 to 248 (LQTTNLSKTY…SILDTLSVLG (245 aa)) is the ABC transporter domain. Residue 42-49 (GPSGSGKT) participates in ATP binding.

This sequence belongs to the ABC transporter superfamily.

This is an uncharacterized protein from Bacillus subtilis (strain 168).